The following is a 116-amino-acid chain: Nitrogen regulatory PII-like protein (116 aa).

Belongs to the P(II) protein family. As to quaternary structure, needs to interact with NrgA in order to localize correctly to the membrane.

Its subcellular location is the cell membrane. In terms of biological role, required for full induction of the nrgAB operon under conditions of ammonium limitation. The sequence is that of Nitrogen regulatory PII-like protein (nrgB) from Bacillus subtilis (strain 168).